Here is a 252-residue protein sequence, read N- to C-terminus: Ribosomal RNA small subunit methyltransferase J (252 aa).

Residues 101–102 (RD), 117–118 (ER), 153–154 (SS), and Asp-171 contribute to the S-adenosyl-L-methionine site.

This sequence belongs to the methyltransferase superfamily. RsmJ family.

It is found in the cytoplasm. It catalyses the reaction guanosine(1516) in 16S rRNA + S-adenosyl-L-methionine = N(2)-methylguanosine(1516) in 16S rRNA + S-adenosyl-L-homocysteine + H(+). In terms of biological role, specifically methylates the guanosine in position 1516 of 16S rRNA. This chain is Ribosomal RNA small subunit methyltransferase J, found in Salmonella paratyphi B (strain ATCC BAA-1250 / SPB7).